Reading from the N-terminus, the 149-residue chain is Basic phospholipase A2 homolog MitTx-beta (149 aa).

A signal peptide spans 1-30; that stretch reads MDKMNPAHLLVLAAVCVSLLGASSIPPQAL. 7 disulfides stabilise this stretch: Cys-41/Cys-100, Cys-55/Cys-148, Cys-57/Cys-73, Cys-72/Cys-130, Cys-79/Cys-123, Cys-89/Cys-116, and Cys-109/Cys-121.

This sequence belongs to the phospholipase A2 family. Group I subfamily. K49 sub-subfamily. As to quaternary structure, heterodimer of an alpha (Kunitz-type) and a beta (phospholipase A2 homolog) chains; non-covalently-linked. In terms of tissue distribution, expressed by the venom gland.

It localises to the secreted. Heterodimer: MitTx, a heteromeric complex between Kunitz- and phospholipase-A2-like proteins, potently, persistently and selectively activates rat and chicken acid-sensing ion channel ASIC1. Both alternatively spliced rat isoforms ASIC1a and ASIC1b are activated, with a higher potency for ASIC1a (EC(50)=9.4 nM) vs ASIC1b (EC(50)=23 nM). The rat ASIC3 subtype is also sensitive to the heterodimer, but with a lower potency (EC(50)=830 nM). On rat ASIC2a, the toxin shows a very weak activation, but produces a remarkable potentiation (&gt;100-fold) of protons when the extracellular pH drops below neutrality. Moderate and weak activations are also observed on the heterotrimers Asic1a-Asic2a and Asic1a-Asic3 (expressed in CHO cells), respectively. The binding sites of the beta subunit of MitTx and the spider psalmotoxin-1 toxin overlap, explaining why these toxins are mutually exclusive. In vivo, the heterodimer elicits robust pain-related behavior in mice by activation of ASIC1 channels on capsaicin-sensitive nerve fibers. Functionally, monomer: does not have phospholipase A2 activity but may maintain some lipid-binding character from its PLA2 lineage, which could aid in effecting neuronal depolarization. This Micrurus tener tener (Texas coral snake) protein is Basic phospholipase A2 homolog MitTx-beta.